Reading from the N-terminus, the 349-residue chain is N-formyl peptide receptor 3 (349 aa).

Residues 1-27 (METNFSIPLNETEEVLPEPAGHTVLWI) are Extracellular-facing. N-linked (GlcNAc...) asparagine glycosylation is found at Asn-4 and Asn-10. The chain crosses the membrane as a helical span at residues 28–50 (FSLLVHGVTFIFGVLGNGLVIWV). Topologically, residues 51-61 (AGFRMTRTVNT) are cytoplasmic. The helical transmembrane segment at 62–83 (ICYLNLALADFSFSAILPFHMV) threads the bilayer. The Extracellular segment spans residues 84-100 (SVAMREKWPFGTFLCKL). A disulfide bridge connects residues Cys-98 and Cys-176. A helical transmembrane segment spans residues 101–121 (VHVMIDINLFVSVYLITIIAL). Over 122–140 (DRCICVLHPAWAQNHRTMS) the chain is Cytoplasmic. The helical transmembrane segment at 141 to 162 (LAKRVMTGLWILTIVLTLPNFI) threads the bilayer. Topologically, residues 163–205 (FWTTISTTNGDTYCIFNYPFWGDTVVERMNVFITMAKVSLILH) are extracellular. Residues 206-226 (FIIGFSIPMSIITVCYGIIVA) form a helical membrane-spanning segment. The Cytoplasmic segment spans residues 227 to 242 (KIHKKRMTKSSRPLHI). The chain crosses the membrane as a helical span at residues 243–266 (FTAVVASFFICWFPYELTGILMAV). The Extracellular portion of the chain corresponds to 267–286 (WLKEILLNGKYKIILVLINP). The helical transmembrane segment at 287–306 (TSSLAFFNSCLNPSLYVFMG) threads the bilayer. The Cytoplasmic portion of the chain corresponds to 307-349 (HNFQERLIRSLPTSLERALTEVPDSAQTSNTHTTSASPPEETE). A disordered region spans residues 327–349 (EVPDSAQTSNTHTTSASPPEETE). The segment covering 331–343 (SAQTSNTHTTSAS) has biased composition (polar residues).

Belongs to the G-protein coupled receptor 1 family.

Its subcellular location is the cell membrane. Functionally, low affinity receptor for N-formyl-methionyl peptides, which are powerful neutrophils chemotactic factors. Binding of FMLP to the receptor causes activation of neutrophils. This response is mediated via a G-protein that activates a phosphatidylinositol-calcium second messenger system. In Macaca mulatta (Rhesus macaque), this protein is N-formyl peptide receptor 3 (FPR3).